Reading from the N-terminus, the 480-residue chain is MNFETVIGLEVHVELNTNSKIFSPTSAHFGNDQNANTNVIDWSFPGVLPVLNKGVVDAGIKAALALNMDIHKKMHFDRKNYFYPDNPKAYQISQFDEPIGYNGWIEVELEDGTTKKIGIERAHLEEDAGKNTHGTDGYSYVDLNRQGVPLIEIVSEADMRSPEEAYAYLTALKEVIQYAGISDVKMEEGSMRVDANISLRPYGQEKFGTKTELKNLNSFSNVRKGLEYEVQRQAEILRSGGQIRQETRRYDEANKATILMRVKEGAADYRYFPEPDLPLFEISDEWIEEMRTELPEFPKERRARYVSDLGLSDYDASQLTANKVTSNFFEKAVALGGDAKQVSNWLQGEVAQFLNAEGKTLEQIELTPENLVEMITIIEDGTISSKIAKKVFVHLAKNGGGAREYVEKAGMVQISDPAILIPIIHQVFADNEAAVADFKSGKRNADKAFTGFLMRATKGQANPQVALKLLAQELAKLKEN.

It belongs to the GatB/GatE family. GatB subfamily. Heterotrimer of A, B and C subunits.

The catalysed reaction is L-glutamyl-tRNA(Gln) + L-glutamine + ATP + H2O = L-glutaminyl-tRNA(Gln) + L-glutamate + ADP + phosphate + H(+). It carries out the reaction L-aspartyl-tRNA(Asn) + L-glutamine + ATP + H2O = L-asparaginyl-tRNA(Asn) + L-glutamate + ADP + phosphate + 2 H(+). In terms of biological role, allows the formation of correctly charged Asn-tRNA(Asn) or Gln-tRNA(Gln) through the transamidation of misacylated Asp-tRNA(Asn) or Glu-tRNA(Gln) in organisms which lack either or both of asparaginyl-tRNA or glutaminyl-tRNA synthetases. The reaction takes place in the presence of glutamine and ATP through an activated phospho-Asp-tRNA(Asn) or phospho-Glu-tRNA(Gln). This is Aspartyl/glutamyl-tRNA(Asn/Gln) amidotransferase subunit B from Streptococcus pneumoniae (strain ATCC 700669 / Spain 23F-1).